A 133-amino-acid chain; its full sequence is FPRL1 inhibitory protein (133 aa).

The first 28 residues, 1-28, serve as a signal peptide directing secretion; sequence MKKNITKTIIASTVIAAGLLTQTNDAKA.

Belongs to the CHIPS/FLIPr family.

It localises to the secreted. May be involved in countering the first line of host defense mechanisms. Impairs the leukocyte response to FPRL1 agonists by binding directly to host FPRL1. Exerts, in vitro, anti-inflammatory activity by inhibiting calcium mobilization and cell migration toward chemoattractants. This chain is FPRL1 inhibitory protein (flr), found in Staphylococcus aureus (strain Newman).